We begin with the raw amino-acid sequence, 714 residues long: BBSome complex member bbs-2 (714 aa).

Coiled-coil stretches lie at residues 332 to 361 and 597 to 627; these read IREFGQKKHNLMMELSNYEQEEQLADVEKD and MTEVRDRLTAELQERQAAVKEIIIRAEDSIA.

As to quaternary structure, part of BBSome complex, that contains at least bbs-1, bbs-2, bbs-4, bbs-5, osm-12, bbs-8/ttc-8 and bbs-9. Expressed in ciliated cells including amphid and both inner and outer labial neurons of the head and in both phasmid neurons PHA and PHB in the tail at larval stages L1 and L2.

The protein localises to the cell projection. It is found in the cilium. The protein resides in the cytoplasm. Its subcellular location is the cytoskeleton. It localises to the cilium basal body. The protein localises to the cilium axoneme. Component of the BBSome complex. The BBSome complex is thought to function as a coat complex required for sorting of specific membrane proteins to the primary cilia. The BBSome complex is required for ciliogenesis but is dispensable for centriolar satellite function. Required for proper BBSome complex assembly and its ciliary localization. Required for cilia biogenesis and both the assembly and movement of intraflagellar transport proteins along the ciliary axoneme. In Caenorhabditis elegans, this protein is BBSome complex member bbs-2.